The primary structure comprises 408 residues: S-adenosylmethionine synthase (408 aa).

ATP is bound at residue His-19. Asp-21 is a binding site for Mg(2+). Glu-47 is a binding site for K(+). L-methionine contacts are provided by Glu-60 and Gln-104. Positions 104-114 (QSPEIASGVDH) are flexible loop. Residues 185–187 (DAK), 255–256 (RF), Asp-264, 270–271 (RK), Ala-287, and Lys-291 contribute to the ATP site. Asp-264 is an L-methionine binding site. Lys-295 is an L-methionine binding site.

It belongs to the AdoMet synthase family. Homotetramer; dimer of dimers. Mg(2+) serves as cofactor. Requires K(+) as cofactor.

The protein localises to the cytoplasm. It catalyses the reaction L-methionine + ATP + H2O = S-adenosyl-L-methionine + phosphate + diphosphate. It participates in amino-acid biosynthesis; S-adenosyl-L-methionine biosynthesis; S-adenosyl-L-methionine from L-methionine: step 1/1. Functionally, catalyzes the formation of S-adenosylmethionine (AdoMet) from methionine and ATP. The overall synthetic reaction is composed of two sequential steps, AdoMet formation and the subsequent tripolyphosphate hydrolysis which occurs prior to release of AdoMet from the enzyme. This Deinococcus radiodurans (strain ATCC 13939 / DSM 20539 / JCM 16871 / CCUG 27074 / LMG 4051 / NBRC 15346 / NCIMB 9279 / VKM B-1422 / R1) protein is S-adenosylmethionine synthase.